Consider the following 650-residue polypeptide: Macrolide export ATP-binding/permease protein MacB (650 aa).

Residues 9-248 (IELIDLERVF…RPLGRPPGGA (240 aa)) enclose the ABC transporter domain. 45–52 (GQSGSGKS) serves as a coordination point for ATP. The next 4 helical transmembrane spans lie at 276 to 296 (ALTLLGVVIGVAAVVTMMAIG), 525 to 545 (LTLLLGAVALISLLVGGIGVM), 580 to 600 (AVAVCGVGGLAGVGLGLGAAL), and 615 to 635 (PPIVAFCCAFLTGLLFGYLPA).

This sequence belongs to the ABC transporter superfamily. Macrolide exporter (TC 3.A.1.122) family. As to quaternary structure, homodimer.

It localises to the cell inner membrane. Its function is as follows. Non-canonical ABC transporter that contains transmembrane domains (TMD), which form a pore in the inner membrane, and an ATP-binding domain (NBD), which is responsible for energy generation. Confers resistance against macrolides. The polypeptide is Macrolide export ATP-binding/permease protein MacB (Rhodospirillum rubrum (strain ATCC 11170 / ATH 1.1.1 / DSM 467 / LMG 4362 / NCIMB 8255 / S1)).